Reading from the N-terminus, the 83-residue chain is MSGDKTIQFDPVENKKTLTKEILTKVYNSLLEKGYNPVNQLVGYLISGDPTYITNYNGARSLVIKLERDEILEEVIKSYLGIN.

The protein belongs to the UPF0297 family.

The sequence is that of UPF0297 protein CLK_1948 from Clostridium botulinum (strain Loch Maree / Type A3).